Here is a 365-residue protein sequence, read N- to C-terminus: Probable G-protein coupled receptor 142 (365 aa).

The Extracellular portion of the chain corresponds to 1–66; it reads MHLNSNPNSY…WPESPERSPC (66 aa). Asn-44 carries an N-linked (GlcNAc...) asparagine glycan. Residues 67 to 87 traverse the membrane as a helical segment; sequence VAGIIPVIYYSVLLSLGLPVA. Residues 88-102 lie on the Cytoplasmic side of the membrane; that stretch reads LARLAARTRKPSYHY. A helical transmembrane segment spans residues 103 to 123; the sequence is LLALTASDIVTQVIIVFVGFL. The Extracellular segment spans residues 124–140; sequence LQGAVLARQVPQAVVRT. The chain crosses the membrane as a helical span at residues 141–161; the sequence is ANILEFAANHASVWIAVLFTV. Topologically, residues 162–185 are cytoplasmic; sequence DRYNALCRPLRHRATSSPGRTHRA. The chain crosses the membrane as a helical span at residues 186 to 206; that stretch reads IAAVIGVTLLTGIPFYWWLDV. Residues 207-224 lie on the Extracellular side of the membrane; the sequence is WRDADPPSTMDKLLKWAH. A helical membrane pass occupies residues 225-245; the sequence is CLIVYFIPCNVFLVTNSAIIL. The Cytoplasmic portion of the chain corresponds to 246–264; it reads RLRKRGQRGLRPLVSKSTA. A helical transmembrane segment spans residues 265 to 285; the sequence is ILLGVTSLFALLWAPRIIVML. At 286-304 the chain is on the extracellular side; sequence YHLYVAPVHRDWRVHLALD. Residues 305–325 traverse the membrane as a helical segment; the sequence is IANMLAMLNTEVNFGLYCFIS. Residues 326–365 lie on the Cytoplasmic side of the membrane; the sequence is KTFRATVRQVICDVHMACALKSQPKQTVVELMLKSVGTEL.

The protein belongs to the G-protein coupled receptor 1 family.

It is found in the cell membrane. Orphan receptor. The chain is Probable G-protein coupled receptor 142 (Gpr142) from Mus musculus (Mouse).